A 101-amino-acid chain; its full sequence is Urease subunit beta (101 aa).

This sequence belongs to the urease beta subunit family. As to quaternary structure, heterotrimer of UreA (gamma), UreB (beta) and UreC (alpha) subunits. Three heterotrimers associate to form the active enzyme.

It localises to the cytoplasm. The catalysed reaction is urea + 2 H2O + H(+) = hydrogencarbonate + 2 NH4(+). Its pathway is nitrogen metabolism; urea degradation; CO(2) and NH(3) from urea (urease route): step 1/1. This chain is Urease subunit beta, found in Burkholderia vietnamiensis (strain G4 / LMG 22486) (Burkholderia cepacia (strain R1808)).